Reading from the N-terminus, the 430-residue chain is Gamma-glutamyl phosphate reductase (430 aa).

It belongs to the gamma-glutamyl phosphate reductase family.

It is found in the cytoplasm. The enzyme catalyses L-glutamate 5-semialdehyde + phosphate + NADP(+) = L-glutamyl 5-phosphate + NADPH + H(+). It participates in amino-acid biosynthesis; L-proline biosynthesis; L-glutamate 5-semialdehyde from L-glutamate: step 2/2. Functionally, catalyzes the NADPH-dependent reduction of L-glutamate 5-phosphate into L-glutamate 5-semialdehyde and phosphate. The product spontaneously undergoes cyclization to form 1-pyrroline-5-carboxylate. This Rhodopseudomonas palustris (strain TIE-1) protein is Gamma-glutamyl phosphate reductase.